The sequence spans 189 residues: Glycerol-3-phosphate acyltransferase (189 aa).

Transmembrane regions (helical) follow at residues 1-21 (MFWLLALLAYLLGSLSFAIVL), 50-70 (KLAILTLLGDLCKGLLPVLLA), 77-97 (LHAQAWVGICAVLGHLFPLYF), 111-131 (MLMGLYFPAALLAIGAWLLTF), and 151-171 (LLAWREPEALLPISVLTVMIV).

Belongs to the PlsY family. Probably interacts with PlsX.

It localises to the cell inner membrane. It carries out the reaction an acyl phosphate + sn-glycerol 3-phosphate = a 1-acyl-sn-glycero-3-phosphate + phosphate. It functions in the pathway lipid metabolism; phospholipid metabolism. Its function is as follows. Catalyzes the transfer of an acyl group from acyl-phosphate (acyl-PO(4)) to glycerol-3-phosphate (G3P) to form lysophosphatidic acid (LPA). This enzyme utilizes acyl-phosphate as fatty acyl donor, but not acyl-CoA or acyl-ACP. The protein is Glycerol-3-phosphate acyltransferase of Pseudomonas putida (strain ATCC 700007 / DSM 6899 / JCM 31910 / BCRC 17059 / LMG 24140 / F1).